A 179-amino-acid polypeptide reads, in one-letter code: ECF RNA polymerase sigma factor SigF (179 aa).

The sigma-70 factor domain-2 stretch occupies residues 33 to 93; that stretch reads RLRAYFMRRM…KLIDHWRRRK (61 aa). The short motif at 51 to 64 is the Polymerase core binding element; that stretch reads DLVQETLLAVHLKR. Residues 123 to 170 form a sigma-70 factor domain-4 region; sequence ALASLPQRQRMLVSDVKLTGLSLAEAGARAGISEGAAKVALHRALKAL. The H-T-H motif DNA-binding region spans 145–164; that stretch reads LAEAGARAGISEGAAKVALH.

Belongs to the sigma-70 factor family. ECF subfamily.

It is found in the cytoplasm. In terms of biological role, sigma factors are initiation factors that promote the attachment of RNA polymerase to specific initiation sites and are then released. Extracytoplasmic function (ECF) sigma factors are held in an inactive form by a cognate anti-sigma factor (NrsF in this case) until they are released. Up-regulates expression of 4 operons (sigF-nrsF, CCNA_02834, CCNA_03001 to CCNA_02999 and CCNA_03363 to CCNA_03366) in response to potassium dichromate (K(2)Cr(2)O(7)) or cadmium chloride (CdCl(2)). Overexpression of sigF leads to higher expression of its regulon. The polypeptide is ECF RNA polymerase sigma factor SigF (Caulobacter vibrioides (strain NA1000 / CB15N) (Caulobacter crescentus)).